The sequence spans 506 residues: Arabinose import ATP-binding protein AraG (506 aa).

ABC transporter domains are found at residues 10-245 (LEFC…MVGR) and 253-501 (YRSR…MLGN). Position 42–49 (42–49 (GENGAGKS)) interacts with ATP.

This sequence belongs to the ABC transporter superfamily. Arabinose importer (TC 3.A.1.2.2) family. In terms of assembly, the complex is composed of two ATP-binding proteins (AraG), two transmembrane proteins (AraH) and a solute-binding protein (AraF).

The protein localises to the cell inner membrane. The catalysed reaction is L-arabinose(out) + ATP + H2O = L-arabinose(in) + ADP + phosphate + H(+). In terms of biological role, part of the ABC transporter complex AraFGH involved in arabinose import. Responsible for energy coupling to the transport system. In Vibrio parahaemolyticus serotype O3:K6 (strain RIMD 2210633), this protein is Arabinose import ATP-binding protein AraG.